The chain runs to 155 residues: Ribonuclease H (155 aa).

One can recognise an RNase H type-1 domain in the interval 5 to 146 (LAEVVEIFTD…ADMLANRGVQ (142 aa)). Mg(2+)-binding residues include Asp-14, Glu-52, Asp-74, and Asp-138.

Belongs to the RNase H family. In terms of assembly, monomer. Mg(2+) is required as a cofactor.

Its subcellular location is the cytoplasm. It carries out the reaction Endonucleolytic cleavage to 5'-phosphomonoester.. In terms of biological role, endonuclease that specifically degrades the RNA of RNA-DNA hybrids. The chain is Ribonuclease H from Nitrosospira multiformis (strain ATCC 25196 / NCIMB 11849 / C 71).